The primary structure comprises 140 residues: L-fucose mutarotase (140 aa).

Catalysis depends on His22, which acts as the Proton donor. Residues Asp30, Arg107, and 129–131 (YGN) contribute to the substrate site.

The protein belongs to the RbsD / FucU family. FucU mutarotase subfamily. Homodecamer.

The protein localises to the cytoplasm. It catalyses the reaction alpha-L-fucose = beta-L-fucose. It functions in the pathway carbohydrate metabolism; L-fucose metabolism. Involved in the anomeric conversion of L-fucose. The sequence is that of L-fucose mutarotase from Klebsiella pneumoniae (strain 342).